A 520-amino-acid chain; its full sequence is TnpB-like protein L770 (520 aa).

The tract at residues 23 to 44 is disordered; it reads KTKKKVFVKKKPPDKKPLKKPV. Positions 474, 477, 491, and 494 each coordinate Zn(2+).

In the central section; belongs to the transposase 2 family. It in the C-terminal section; belongs to the transposase 35 family.

In Acanthamoeba polyphaga mimivirus (APMV), this protein is TnpB-like protein L770.